Here is a 508-residue protein sequence, read N- to C-terminus: Photosystem II CP47 reaction center protein (508 aa).

The next 6 membrane-spanning stretches (helical) occupy residues 21-36 (SVHI…WAGS), 101-115 (IVFS…IWHW), 140-156 (GIHL…FGAF), 203-218 (IAAG…FHLS), 237-252 (VLSS…AFVV), and 457-472 (TFAL…HGAR).

Belongs to the PsbB/PsbC family. PsbB subfamily. PSII is composed of 1 copy each of membrane proteins PsbA, PsbB, PsbC, PsbD, PsbE, PsbF, PsbH, PsbI, PsbJ, PsbK, PsbL, PsbM, PsbT, PsbX, PsbY, PsbZ, Psb30/Ycf12, at least 3 peripheral proteins of the oxygen-evolving complex and a large number of cofactors. It forms dimeric complexes. Binds multiple chlorophylls. PSII binds additional chlorophylls, carotenoids and specific lipids. serves as cofactor.

It localises to the plastid. The protein resides in the chloroplast thylakoid membrane. Its function is as follows. One of the components of the core complex of photosystem II (PSII). It binds chlorophyll and helps catalyze the primary light-induced photochemical processes of PSII. PSII is a light-driven water:plastoquinone oxidoreductase, using light energy to abstract electrons from H(2)O, generating O(2) and a proton gradient subsequently used for ATP formation. In Chloranthus spicatus (Chulantree), this protein is Photosystem II CP47 reaction center protein.